The chain runs to 455 residues: Bifunctional protein GlmU (455 aa).

A pyrophosphorylase region spans residues 1-227; it reads MDSLSIVILA…SWEAAGVNNK (227 aa). UDP-N-acetyl-alpha-D-glucosamine contacts are provided by residues 9-12, Lys23, Gln74, 79-80, 101-103, Gly137, Glu152, Asn167, and Asn225; these read LAAG, GT, and YGD. Asp103 contacts Mg(2+). Asn225 serves as a coordination point for Mg(2+). A linker region spans residues 228-248; the sequence is VQLAELERILQANQARALLEA. The interval 249-455 is N-acetyltransferase; the sequence is GVTLADPARI…GWKRPQKKSG (207 aa). 2 residues coordinate UDP-N-acetyl-alpha-D-glucosamine: Arg331 and Lys349. His361 (proton acceptor) is an active-site residue. UDP-N-acetyl-alpha-D-glucosamine is bound by residues Tyr364 and Asn375. Residues Ala378, 384 to 385, Ser403, Ala421, and Arg438 contribute to the acetyl-CoA site; that span reads NY.

The protein in the N-terminal section; belongs to the N-acetylglucosamine-1-phosphate uridyltransferase family. This sequence in the C-terminal section; belongs to the transferase hexapeptide repeat family. As to quaternary structure, homotrimer. It depends on Mg(2+) as a cofactor.

Its subcellular location is the cytoplasm. It catalyses the reaction alpha-D-glucosamine 1-phosphate + acetyl-CoA = N-acetyl-alpha-D-glucosamine 1-phosphate + CoA + H(+). It carries out the reaction N-acetyl-alpha-D-glucosamine 1-phosphate + UTP + H(+) = UDP-N-acetyl-alpha-D-glucosamine + diphosphate. It participates in nucleotide-sugar biosynthesis; UDP-N-acetyl-alpha-D-glucosamine biosynthesis; N-acetyl-alpha-D-glucosamine 1-phosphate from alpha-D-glucosamine 6-phosphate (route II): step 2/2. Its pathway is nucleotide-sugar biosynthesis; UDP-N-acetyl-alpha-D-glucosamine biosynthesis; UDP-N-acetyl-alpha-D-glucosamine from N-acetyl-alpha-D-glucosamine 1-phosphate: step 1/1. The protein operates within bacterial outer membrane biogenesis; LPS lipid A biosynthesis. In terms of biological role, catalyzes the last two sequential reactions in the de novo biosynthetic pathway for UDP-N-acetylglucosamine (UDP-GlcNAc). The C-terminal domain catalyzes the transfer of acetyl group from acetyl coenzyme A to glucosamine-1-phosphate (GlcN-1-P) to produce N-acetylglucosamine-1-phosphate (GlcNAc-1-P), which is converted into UDP-GlcNAc by the transfer of uridine 5-monophosphate (from uridine 5-triphosphate), a reaction catalyzed by the N-terminal domain. This chain is Bifunctional protein GlmU, found in Chromobacterium violaceum (strain ATCC 12472 / DSM 30191 / JCM 1249 / CCUG 213 / NBRC 12614 / NCIMB 9131 / NCTC 9757 / MK).